We begin with the raw amino-acid sequence, 493 residues long: Cobyric acid synthase (493 aa).

The region spanning D252 to W441 is the GATase cobBQ-type domain. Catalysis depends on C333, which acts as the Nucleophile. H433 is an active-site residue.

The protein belongs to the CobB/CobQ family. CobQ subfamily.

The protein operates within cofactor biosynthesis; adenosylcobalamin biosynthesis. In terms of biological role, catalyzes amidations at positions B, D, E, and G on adenosylcobyrinic A,C-diamide. NH(2) groups are provided by glutamine, and one molecule of ATP is hydrogenolyzed for each amidation. This Thermosynechococcus vestitus (strain NIES-2133 / IAM M-273 / BP-1) protein is Cobyric acid synthase.